A 78-amino-acid polypeptide reads, in one-letter code: Putative antitoxin VapB4 (78 aa).

The protein belongs to the UPF0330 family.

Its function is as follows. Possibly the antitoxin component of a type II toxin-antitoxin (TA) system. Its cognate toxin is VapC4 (Potential). In Pyrococcus furiosus (strain ATCC 43587 / DSM 3638 / JCM 8422 / Vc1), this protein is Putative antitoxin VapB4 (vapB4).